The following is a 143-amino-acid chain: Small ribosomal subunit protein uS11c (143 aa).

This sequence belongs to the universal ribosomal protein uS11 family. As to quaternary structure, part of the 30S ribosomal subunit.

The protein localises to the plastid. The protein resides in the chloroplast. In Brachypodium distachyon (Purple false brome), this protein is Small ribosomal subunit protein uS11c.